The sequence spans 2292 residues: Protein Ycf2 (2292 aa).

1644–1651 (GSIGTGRS) serves as a coordination point for ATP.

The protein belongs to the Ycf2 family.

The protein localises to the plastid. It is found in the chloroplast stroma. Functionally, probable ATPase of unknown function. Its presence in a non-photosynthetic plant (Epifagus virginiana) and experiments in tobacco indicate that it has an essential function which is probably not related to photosynthesis. This Morus indica (Mulberry) protein is Protein Ycf2.